We begin with the raw amino-acid sequence, 660 residues long: DNA mismatch repair protein MutL (660 aa).

The protein belongs to the DNA mismatch repair MutL/HexB family.

This protein is involved in the repair of mismatches in DNA. It is required for dam-dependent methyl-directed DNA mismatch repair. May act as a 'molecular matchmaker', a protein that promotes the formation of a stable complex between two or more DNA-binding proteins in an ATP-dependent manner without itself being part of a final effector complex. In Streptococcus pyogenes serotype M3 (strain ATCC BAA-595 / MGAS315), this protein is DNA mismatch repair protein MutL.